A 303-amino-acid chain; its full sequence is Crk-like protein (303 aa).

In terms of domain architecture, SH2 spans 14-102 (WYMGPVTRQE…LDTTTLIEPA (89 aa)). One can recognise an SH3 1 domain in the interval 123-183 (ENLEYVRTLY…PVPYVEKLVR (61 aa)). Tyr127 is modified (phosphotyrosine). The segment at 184–203 (SSPHGKHGNRNSNSYGIPEP) is disordered. Tyr207 bears the Phosphotyrosine mark. The 62-residue stretch at 235 to 296 (NGPVFAKAIQ…PFTHVKIFDP (62 aa)) folds into the SH3 2 domain.

It belongs to the CRK family. As to quaternary structure, interacts with DOCK2 and EPOR. Interacts with phosphorylated CBLB and IRS4. Interacts with INPP5D/SHIP1. Interacts with BCAR1/CAS and NEDD9/HEF1. Phosphorylated on tyrosine. Phosphorylation is prominent during early development, but decreases at later embryonic stages and in newborn mice.

May mediate the transduction of intracellular signals. This chain is Crk-like protein (Crkl), found in Mus musculus (Mouse).